The following is a 234-amino-acid chain: Probable transcriptional regulatory protein PSPPH_2212 (234 aa).

Belongs to the TACO1 family.

The protein localises to the cytoplasm. This chain is Probable transcriptional regulatory protein PSPPH_2212, found in Pseudomonas savastanoi pv. phaseolicola (strain 1448A / Race 6) (Pseudomonas syringae pv. phaseolicola (strain 1448A / Race 6)).